The primary structure comprises 256 residues: MGKTKDIGDDDTVASEFWSGALSQPSSVPTRPRTPNRDSWRRAWAARGLHPRPSILQPGPARLSRARAGGTRCPQRRHGRATFCALGRGIGVRRGPGPRPARIPGLTLTWKRMSARRMQWAMQTGGRNQTFGGGVPLFWTWLTICCAVWRSLPCRLTHSCSRAFSSAPLKKTKSSMLPPKQALASAARNLCRGAGCNRQAVAGQLLPSTWSLHAHGLAKEAPILPVKKISRSCSVNNKVSKKTTKPPTLRSFLSPI.

2 disordered regions span residues 1 to 38 and 51 to 75; these read MGKTKDIGDDDTVASEFWSGALSQPSSVPTRPRTPNRD and PRPSILQPGPARLSRARAGGTRCPQ.

This is an uncharacterized protein from Homo sapiens (Human).